Consider the following 334-residue polypeptide: MAAGLPETEIDVRALGKVAVLMGGDSAEREVSLMSGGGVLQALRARGVDAHAFDPSQSDLSELKSHGYARCFIALHGRHGEDGTVQGALELLGIPYTGPGVMASAIAMDKIMTKRIWRFEGLPTPDWRLVSSAAETAQALEDLGSPMIVKPSREGSTIGLTKVTSPGQCEQAYRLASRYDPEVLCEQFIEGEETTCPVLGQGAGAHALPVIRIVAPEGNYDYQNKYFTDVTQYHCPCGLPEQEEREIQRLVVEAFRTLQCRGWARADIMIRASDRKPFLLEINTSPGMTGHSLVPMSARAMGVSYEELCLRILAGASLDARQGQVDAAGHPGAA.

The region spanning 114 to 314 is the ATP-grasp domain; the sequence is KRIWRFEGLP…YEELCLRILA (201 aa). Position 140-195 (140-195) interacts with ATP; it reads LEDLGSPMIVKPSREGSTIGLTKVTSPGQCEQAYRLASRYDPEVLCEQFIEGEETT. Residues D267, E281, and N283 each contribute to the Mg(2+) site.

The protein belongs to the D-alanine--D-alanine ligase family. It depends on Mg(2+) as a cofactor. The cofactor is Mn(2+).

The protein localises to the cytoplasm. It carries out the reaction 2 D-alanine + ATP = D-alanyl-D-alanine + ADP + phosphate + H(+). Its pathway is cell wall biogenesis; peptidoglycan biosynthesis. In terms of biological role, cell wall formation. In Paracidovorax citrulli (strain AAC00-1) (Acidovorax citrulli), this protein is D-alanine--D-alanine ligase.